The sequence spans 521 residues: Type-1 glutamine synthetase 2 (521 aa).

Residues 76–176 enclose the GS beta-grasp domain; sequence NQIKISKSPF…FLMDFIGTNG (101 aa). Residues 183–521 form the GS catalytic domain; sequence PRSTLKKVIK…WELERYLEII (339 aa).

It belongs to the glutamine synthetase family.

The catalysed reaction is L-glutamate + NH4(+) + ATP = L-glutamine + ADP + phosphate + H(+). This chain is Type-1 glutamine synthetase 2 (glnA2), found in Dictyostelium discoideum (Social amoeba).